An 844-amino-acid chain; its full sequence is DNA mismatch repair protein MutS (844 aa).

Residue 610–617 coordinates ATP; it reads GPNMGGKS.

Belongs to the DNA mismatch repair MutS family.

Functionally, this protein is involved in the repair of mismatches in DNA. It is possible that it carries out the mismatch recognition step. This protein has a weak ATPase activity. The sequence is that of DNA mismatch repair protein MutS from Francisella tularensis subsp. tularensis (strain WY96-3418).